The sequence spans 364 residues: 4-hydroxy-3-methylbut-2-en-1-yl diphosphate synthase (flavodoxin) (364 aa).

[4Fe-4S] cluster is bound by residues Cys268, Cys271, Cys303, and Glu310.

Belongs to the IspG family. The cofactor is [4Fe-4S] cluster.

The catalysed reaction is (2E)-4-hydroxy-3-methylbut-2-enyl diphosphate + oxidized [flavodoxin] + H2O + 2 H(+) = 2-C-methyl-D-erythritol 2,4-cyclic diphosphate + reduced [flavodoxin]. Its pathway is isoprenoid biosynthesis; isopentenyl diphosphate biosynthesis via DXP pathway; isopentenyl diphosphate from 1-deoxy-D-xylulose 5-phosphate: step 5/6. In terms of biological role, converts 2C-methyl-D-erythritol 2,4-cyclodiphosphate (ME-2,4cPP) into 1-hydroxy-2-methyl-2-(E)-butenyl 4-diphosphate. This chain is 4-hydroxy-3-methylbut-2-en-1-yl diphosphate synthase (flavodoxin), found in Desulfotalea psychrophila (strain LSv54 / DSM 12343).